Consider the following 388-residue polypeptide: MRDVCLPFLARENLSNPESGLILLEDTERSHSSLRIGQNAPDGVWPLGNSPILPVVTPWPLCQDHAAPSIWTLLDAYWRGYQDQNLEPPKWLWLCLEDPSGNKYTGTQFLVPPLGLVKIRLYQNLTVVYICQSIDPWENENPTGGRRDPTRRYGCRIACDPVYCVKIVWEGNLWDKKDQPCWLIRLKEGHNHGAKELSQRDIKILGESRPYPYGLIGQCPKLQYAIQVKMRVDKAPLTAKVLAVKALHFHRWNICQRENPGIGEGYFPSGYTQALKAYGPQHGSAEQRVWLISTKIVGPQEKDYWRDAYRWGYFPLVPNKHHPGWTRHLTKFKISRFATPADIQKIVDELLPRGASIVTADGNRYESTRKVHLVNEGTLEEYQAKIRK.

Belongs to the spumavirus protein Bel-2 family.

The chain is Protein Bel-2 (bel2) from Simian foamy virus type 3 (strain LK3) (SFVagm).